Consider the following 347-residue polypeptide: Haptoglobin (347 aa).

The first 18 residues, 1–18 (MSDLGAVVALLLWGQLFA), serve as a signal peptide directing secretion. A Sushi domain is found at 31 to 88 (DGCPKPPMIANGYVEHLVRYQCKNYYRLRTEGDGVYTLNNEKQWTNKAVGDKLPECEA). 2 disulfides stabilise this stretch: cysteine 52/cysteine 86 and cysteine 90/cysteine 207. The interval 103–347 (ILGGHLDAKG…DWVQKTIAEN (245 aa)) is serine protease. Asparagine 125, asparagine 148, asparagine 152, asparagine 182, and asparagine 232 each carry an N-linked (GlcNAc...) asparagine glycan. 2 cysteine pairs are disulfide-bonded: cysteine 250–cysteine 281 and cysteine 292–cysteine 322. Residues 259 to 264 (VPEKKT) form an interaction with CD163 region.

The protein belongs to the peptidase S1 family. As to quaternary structure, tetramer of two alpha and two beta chains; disulfide-linked. The hemoglobin/haptoglobin complex is composed of a haptoglobin dimer bound to two hemoglobin alpha-beta dimers. Interacts with CD163. Interacts with ERGIC3. In terms of tissue distribution, expressed by the liver and secreted in plasma.

The protein localises to the secreted. Its function is as follows. As a result of hemolysis, hemoglobin is found to accumulate in the kidney and is secreted in the urine. Haptoglobin captures, and combines with free plasma hemoglobin to allow hepatic recycling of heme iron and to prevent kidney damage. Haptoglobin also acts as an antioxidant, has antibacterial activity and plays a role in modulating many aspects of the acute phase response. Hemoglobin/haptoglobin complexes are rapidly cleared by the macrophage CD163 scavenger receptor expressed on the surface of liver Kupfer cells through an endocytic lysosomal degradation pathway. The chain is Haptoglobin (HP) from Papio hamadryas (Hamadryas baboon).